The chain runs to 803 residues: Rho guanine nucleotide exchange factor 7 (803 aa).

The residue at position 1 (M1) is an N-acetylmethionine. Residues 1-133 form the Calponin-homology (CH) domain; it reads MNSAEQTVTW…SLVTLNKVTA (133 aa). N2 carries the N-acetylthreonine modification. Phosphoserine is present on residues S153 and S176. The SH3 domain maps to 184–243; sequence NNQLVVRAKFNFQQTNEDELSFSKGDVIHVTRVEEGGWWEGTLNGRTGWFPSNYVREVKA. Phosphoserine is present on residues S249 and S257. The 181-residue stretch at 271–451 folds into the DH domain; it reads YYNVVLQNIL…KNLSAQCQEV (181 aa). The region spanning 473–578 is the PH domain; sequence DIKTLGNVTY…WVEHLQKQTK (106 aa). Residues S518, C560, and V579 each carry the phosphoserine modification. The tract at residues 580 to 655 is disordered; it reads TSVGNPTIKP…TPKPWSLSCL (76 aa). Polar residues predominate over residues 593-606; sequence PSHTLPSHPVTPSS. Phosphoserine is present on residues K645 and S664. Residues 678–690 show a composition bias toward basic residues; it reads KTMKKLLPKRKPE. Disordered regions lie at residues 678-704 and 748-773; these read KTMK…RKST and DDQP…LSED. Residues 691-700 are compositionally biased toward basic and acidic residues; the sequence is RKPSDEEFAS. At S694 the chain carries Phosphoserine; by CaMK1. Residues 752-765 show a composition bias toward low complexity; it reads SLDSLGRRSSLSRL.

As to quaternary structure, interacts with PAK kinases through the SH3 domain. Interacts with GIT1 and TGFB1I1. Interacts with PTK2/FAK1 and RAC1. Interacts with ITCH and PARVB. Interacts with unphosphorylated PAK1. Interacts with SCRIB; interaction is direct and may play a role in regulation of apoptosis. Interacts with FRMPD4 (via N-terminus). Interacts with CaMK1. Interacts with BIN2. Interacts with YWHAZ. Interacts (via PH domain) with NOX1 (via FAD-binding FR-type domain). Interacts with SNX27. Post-translationally, phosphorylated by PTK2/FAK1; this promotes interaction with RAC1. Phosphorylated on Ser-694 by CaMK1; enhancement of GEF activity and downstream activation of RAC1.

The protein localises to the cell junction. It localises to the focal adhesion. Its subcellular location is the cell projection. The protein resides in the ruffle. It is found in the cytoplasm. The protein localises to the cell cortex. It localises to the lamellipodium. Acts as a RAC1 guanine nucleotide exchange factor (GEF) and can induce membrane ruffling. Functions in cell migration, attachment and cell spreading. Promotes targeting of RAC1 to focal adhesions. May function as a positive regulator of apoptosis. Downstream of NMDA receptors and CaMKK-CaMK1 signaling cascade, promotes the formation of spines and synapses in hippocampal neurons. This Homo sapiens (Human) protein is Rho guanine nucleotide exchange factor 7 (ARHGEF7).